We begin with the raw amino-acid sequence, 203 residues long: Putative B3 domain-containing protein At1g50220 (203 aa).

A DNA-binding region (TF-B3) is located at residues 99–195 (DIVGNVALPK…KFIVLNFQHK (97 aa)).

Its subcellular location is the nucleus. The sequence is that of Putative B3 domain-containing protein At1g50220 from Arabidopsis thaliana (Mouse-ear cress).